A 107-amino-acid chain; its full sequence is Cell cycle protein GpsB (107 aa).

A coiled-coil region spans residues 32 to 65 (LDNVIQDYETYISEIEELKAEIERLKNQNTHPKS). The tract at residues 57–80 (KNQNTHPKSPSTENRHAMVQPTRV) is disordered. A compositionally biased stretch (polar residues) spans 58-68 (NQNTHPKSPST).

This sequence belongs to the GpsB family. Forms polymers through the coiled coil domains. Interacts with PBP1, MreC and EzrA.

The protein localises to the cytoplasm. Divisome component that associates with the complex late in its assembly, after the Z-ring is formed, and is dependent on DivIC and PBP2B for its recruitment to the divisome. Together with EzrA, is a key component of the system that regulates PBP1 localization during cell cycle progression. Its main role could be the removal of PBP1 from the cell pole after pole maturation is completed. Also contributes to the recruitment of PBP1 to the division complex. Not essential for septum formation. This is Cell cycle protein GpsB from Streptococcus uberis (strain ATCC BAA-854 / 0140J).